A 362-amino-acid polypeptide reads, in one-letter code: Serine/threonine-protein kinase SBK2 (362 aa).

The segment covering 1-11 (MPGKQSEDKPM) has biased composition (basic and acidic residues). The disordered stretch occupies residues 1–26 (MPGKQSEDKPMEVSTVEDGGDEGLGG). In terms of domain architecture, Protein kinase spans 62 to 330 (YEEVRPLGQG…IKSYLGQPWK (269 aa)). ATP-binding positions include 68-76 (LGQGRFGRV) and Lys-91. The Proton acceptor role is filled by Asp-183. Positions 329–362 (WKQREGEAEELATELREDGWRGGQEAAKGEQPAC) are disordered.

It belongs to the protein kinase superfamily. Ser/Thr protein kinase family. STKL subfamily.

It catalyses the reaction L-seryl-[protein] + ATP = O-phospho-L-seryl-[protein] + ADP + H(+). The catalysed reaction is L-threonyl-[protein] + ATP = O-phospho-L-threonyl-[protein] + ADP + H(+). This chain is Serine/threonine-protein kinase SBK2 (Sbk2), found in Mus musculus (Mouse).